A 194-amino-acid polypeptide reads, in one-letter code: ATP-dependent Clp protease proteolytic subunit (194 aa).

S98 serves as the catalytic Nucleophile. H123 is a catalytic residue.

The protein belongs to the peptidase S14 family. As to quaternary structure, fourteen ClpP subunits assemble into 2 heptameric rings which stack back to back to give a disk-like structure with a central cavity, resembling the structure of eukaryotic proteasomes.

The protein resides in the cytoplasm. It carries out the reaction Hydrolysis of proteins to small peptides in the presence of ATP and magnesium. alpha-casein is the usual test substrate. In the absence of ATP, only oligopeptides shorter than five residues are hydrolyzed (such as succinyl-Leu-Tyr-|-NHMec, and Leu-Tyr-Leu-|-Tyr-Trp, in which cleavage of the -Tyr-|-Leu- and -Tyr-|-Trp bonds also occurs).. Functionally, cleaves peptides in various proteins in a process that requires ATP hydrolysis. Has a chymotrypsin-like activity. Plays a major role in the degradation of misfolded proteins. The sequence is that of ATP-dependent Clp protease proteolytic subunit from Actinobacillus succinogenes (strain ATCC 55618 / DSM 22257 / CCUG 43843 / 130Z).